We begin with the raw amino-acid sequence, 63 residues long: ATP synthase F(0) complex subunit 8 (63 aa).

The helical transmembrane segment at 8–24 threads the bilayer; the sequence is TWFLTILSVMLTLFTLL. Lysine 57 bears the N6-acetyllysine mark.

Belongs to the ATPase protein 8 family. As to quaternary structure, component of the ATP synthase complex composed at least of ATP5F1A/subunit alpha, ATP5F1B/subunit beta, ATP5MC1/subunit c (homooctomer), MT-ATP6/subunit a, MT-ATP8/subunit 8, ATP5ME/subunit e, ATP5MF/subunit f, ATP5MG/subunit g, ATP5MK/subunit k, ATP5MJ/subunit j, ATP5F1C/subunit gamma, ATP5F1D/subunit delta, ATP5F1E/subunit epsilon, ATP5PF/subunit F6, ATP5PB/subunit b, ATP5PD/subunit d, ATP5PO/subunit OSCP. ATP synthase complex consists of a soluble F(1) head domain (subunits alpha(3) and beta(3)) - the catalytic core - and a membrane F(0) domain - the membrane proton channel (subunits c, a, 8, e, f, g, k and j). These two domains are linked by a central stalk (subunits gamma, delta, and epsilon) rotating inside the F1 region and a stationary peripheral stalk (subunits F6, b, d, and OSCP). Interacts with PRICKLE3.

It localises to the mitochondrion membrane. Its function is as follows. Subunit 8, of the mitochondrial membrane ATP synthase complex (F(1)F(0) ATP synthase or Complex V) that produces ATP from ADP in the presence of a proton gradient across the membrane which is generated by electron transport complexes of the respiratory chain. ATP synthase complex consist of a soluble F(1) head domain - the catalytic core - and a membrane F(1) domain - the membrane proton channel. These two domains are linked by a central stalk rotating inside the F(1) region and a stationary peripheral stalk. During catalysis, ATP synthesis in the catalytic domain of F(1) is coupled via a rotary mechanism of the central stalk subunits to proton translocation. In vivo, can only synthesize ATP although its ATP hydrolase activity can be activated artificially in vitro. Part of the complex F(0) domain. In Physeter macrocephalus (Sperm whale), this protein is ATP synthase F(0) complex subunit 8.